An 821-amino-acid chain; its full sequence is High affinity potassium transporter (821 aa).

Positions 1–10 (MSDSQSNKQN) are enriched in polar residues. The disordered stretch occupies residues 1-47 (MSDSQSNKQNQGEDDNNVSSSIESNENYPFRLNDEESEPQSSTTESM). Residues 1–57 (MSDSQSNKQNQGEDDNNVSSSIESNENYPFRLNDEESEPQSSTTESMLKAKKQSWRQ) lie on the Cytoplasmic side of the membrane. Residues 17–27 (NVSSSIESNEN) show a composition bias toward low complexity. The helical transmembrane segment at 58–78 (VLMLGFSSLGAIYGDIGTSPL) threads the bilayer. The Extracellular segment spans residues 79-101 (YVLNSIKYPNSSPTEEDIYGAIS). A helical transmembrane segment spans residues 102 to 122 (IIFYLFTFIVIFKYILIVLFL). The Cytoplasmic portion of the chain corresponds to 123–190 (GTNDGEGGQV…KASGFKTNPK (68 aa)). Residues 191–211 (LIKFISKFILFGCFFGCSLVM) traverse the membrane as a helical segment. Residues 212-238 (SDGLLTPTTSVLSAIAGIQIANPSFND) are Extracellular-facing. A helical membrane pass occupies residues 239-259 (VLAVSEVVLIVLFLIQQFGSN). A topological domain (cytoplasmic) is located at residue K260. Residues 261–281 (ISFTFAPIIFLWLIGLIISGI) form a helical membrane-spanning segment. At 282–306 (YNIVKFHPAVFKSLSPYYAIQLLKH) the chain is on the extracellular side. Residues 307–327 (SGIDVFSGAMLSITGTEAMFA) traverse the membrane as a helical segment. At 328-340 (DVGHFGRLPIQLT) the chain is on the cytoplasmic side. The helical transmembrane segment at 341-361 (LTLFVYPALIICYLGQGAYII) threads the bilayer. The Extracellular portion of the chain corresponds to 362 to 386 (KHPEALSNPFFYSIPGGLNSWIYWV). The helical transmembrane segment at 387 to 407 (MFVLATLSTIIASQALILGVF) threads the bilayer. Topologically, residues 408 to 434 (SITSQLINLDCFPNFKIIHVSKKYAGK) are cytoplasmic. Residues 435–455 (VYIPAINWLLMIGVCATTAGF) form a helical membrane-spanning segment. Residues 456–463 (KNSNNVTA) lie on the Extracellular side of the membrane. Residue N460 is glycosylated (N-linked (GlcNAc...) asparagine). The chain crosses the membrane as a helical span at residues 464 to 484 (AYGLGITLDFLVTSSLIMVCM). The Cytoplasmic portion of the chain corresponds to 485–491 (TYVYNWN). A helical transmembrane segment spans residues 492–512 (ILIPITYALIFLPLEVIMVIS). The Extracellular portion of the chain corresponds to 513–516 (NLKK). A helical transmembrane segment spans residues 517–537 (ITHGAWFPLMMSGIFMMFLSF). The Cytoplasmic portion of the chain corresponds to 538 to 821 (WRWARSRKVN…KMFLGGVVRI (284 aa)).

It belongs to the HAK/KUP transporter (TC 2.A.72) family.

It is found in the membrane. Its function is as follows. Major high-affinity potassium uptake protein. The polypeptide is High affinity potassium transporter (HAK1) (Schwanniomyces occidentalis (Yeast)).